The primary structure comprises 106 residues: Large ribosomal subunit protein bL21 (106 aa).

It belongs to the bacterial ribosomal protein bL21 family. Part of the 50S ribosomal subunit. Contacts protein L20.

In terms of biological role, this protein binds to 23S rRNA in the presence of protein L20. The polypeptide is Large ribosomal subunit protein bL21 (Chlamydia caviae (strain ATCC VR-813 / DSM 19441 / 03DC25 / GPIC) (Chlamydophila caviae)).